Here is a 208-residue protein sequence, read N- to C-terminus: Uridine kinase (208 aa).

Position 11–18 (11–18 (GGTGSGKS)) interacts with ATP.

Belongs to the uridine kinase family.

The protein localises to the cytoplasm. The enzyme catalyses uridine + ATP = UMP + ADP + H(+). It carries out the reaction cytidine + ATP = CMP + ADP + H(+). Its pathway is pyrimidine metabolism; CTP biosynthesis via salvage pathway; CTP from cytidine: step 1/3. It participates in pyrimidine metabolism; UMP biosynthesis via salvage pathway; UMP from uridine: step 1/1. The sequence is that of Uridine kinase from Clostridium perfringens (strain SM101 / Type A).